Here is a 174-residue protein sequence, read N- to C-terminus: Probable carboxylesterase Culp5 (174 aa).

The active-site Nucleophile is the Ser-67. Residues Cys-137 and Cys-144 are joined by a disulfide bond. The active site involves Asp-141. Catalysis depends on His-153, which acts as the Proton donor/acceptor.

Belongs to the cutinase family.

Its function is as follows. Does not exhibit cutinase activity. The chain is Probable carboxylesterase Culp5 from Mycobacterium tuberculosis (strain ATCC 25618 / H37Rv).